We begin with the raw amino-acid sequence, 172 residues long: Peptidyl-prolyl cis-trans isomerase (172 aa).

The 164-residue stretch at 7–170 (FFDMTVGGAP…KVVKVADCGQ (164 aa)) folds into the PPIase cyclophilin-type domain.

Belongs to the cyclophilin-type PPIase family.

The protein localises to the cytoplasm. It carries out the reaction [protein]-peptidylproline (omega=180) = [protein]-peptidylproline (omega=0). Binds cyclosporin A (CsA). CsA mediates some of its effects via an inhibitory action on PPIase. Its function is as follows. PPIases accelerate the folding of proteins. It catalyzes the cis-trans isomerization of proline imidic peptide bonds in oligopeptides. The chain is Peptidyl-prolyl cis-trans isomerase (CYP) from Zea mays (Maize).